We begin with the raw amino-acid sequence, 293 residues long: Acetylglutamate kinase (293 aa).

Residues 70 to 71 (GG), arginine 92, and asparagine 186 each bind substrate.

The protein belongs to the acetylglutamate kinase family. ArgB subfamily.

The protein resides in the cytoplasm. It catalyses the reaction N-acetyl-L-glutamate + ATP = N-acetyl-L-glutamyl 5-phosphate + ADP. The protein operates within amino-acid biosynthesis; L-arginine biosynthesis; N(2)-acetyl-L-ornithine from L-glutamate: step 2/4. Catalyzes the ATP-dependent phosphorylation of N-acetyl-L-glutamate. The protein is Acetylglutamate kinase of Parasynechococcus marenigrum (strain WH8102).